Reading from the N-terminus, the 191-residue chain is Peptidyl-tRNA hydrolase (191 aa).

Y14 contacts tRNA. H19 (proton acceptor) is an active-site residue. Y64, N66, and N112 together coordinate tRNA.

It belongs to the PTH family. Monomer.

The protein localises to the cytoplasm. The catalysed reaction is an N-acyl-L-alpha-aminoacyl-tRNA + H2O = an N-acyl-L-amino acid + a tRNA + H(+). In terms of biological role, hydrolyzes ribosome-free peptidyl-tRNAs (with 1 or more amino acids incorporated), which drop off the ribosome during protein synthesis, or as a result of ribosome stalling. Functionally, catalyzes the release of premature peptidyl moieties from peptidyl-tRNA molecules trapped in stalled 50S ribosomal subunits, and thus maintains levels of free tRNAs and 50S ribosomes. This is Peptidyl-tRNA hydrolase from Clostridium botulinum (strain Alaska E43 / Type E3).